A 693-amino-acid polypeptide reads, in one-letter code: Elongation factor G (693 aa).

One can recognise a tr-type G domain in the interval 8 to 282 (EKTRNIGIMA…AVIDYLPSPL (275 aa)). GTP-binding positions include 17–24 (AHVDAGKT), 81–85 (DTPGH), and 135–138 (NKMD).

This sequence belongs to the TRAFAC class translation factor GTPase superfamily. Classic translation factor GTPase family. EF-G/EF-2 subfamily.

It is found in the cytoplasm. Functionally, catalyzes the GTP-dependent ribosomal translocation step during translation elongation. During this step, the ribosome changes from the pre-translocational (PRE) to the post-translocational (POST) state as the newly formed A-site-bound peptidyl-tRNA and P-site-bound deacylated tRNA move to the P and E sites, respectively. Catalyzes the coordinated movement of the two tRNA molecules, the mRNA and conformational changes in the ribosome. This Streptococcus pneumoniae (strain P1031) protein is Elongation factor G.